Here is a 361-residue protein sequence, read N- to C-terminus: Large ribosomal subunit protein mL45 (361 aa).

This sequence belongs to the mitochondrion-specific ribosomal protein mL45 family.

It is found in the mitochondrion. The polypeptide is Large ribosomal subunit protein mL45 (mrpl-45) (Caenorhabditis briggsae).